We begin with the raw amino-acid sequence, 1127 residues long: E3 ubiquitin-protein ligase TRIM33 (1127 aa).

Positions 1–18 (MAENKGGGEAESGGGGSG) are enriched in gly residues. Residues 1–118 (MAENKGGGEA…PSAGPPPGPP (118 aa)) are disordered. The segment at 1 to 147 (MAENKGGGEA…AEPKLLPCLH (147 aa)) is necessary for E3 ubiquitin-protein ligase activity and repression of SMAD4 signaling and transcriptional repression. A compositionally biased stretch (low complexity) spans 19–37 (SAPVTAGAAGPAAQEAEPP). Positions 52–64 (RAGAEGGAAGPDD) are enriched in gly residues. Residues 65 to 97 (GGVAAASSGSAQAASSPAASVGTGVAGGAVSTP) show a composition bias toward low complexity. Positions 98-118 (APAPASAPAPGPSAGPPPGPP) are enriched in pro residues. The RING-type zinc-finger motif lies at 125–154 (CAVCQQSLQSRREAEPKLLPCLHSFCLRCL). 2 B box-type zinc fingers span residues 212–259 (KSEQ…IRKK) and 271–312 (QRPV…YQFL). Zn(2+) contacts are provided by Cys-217, Cys-220, Cys-241, His-245, Cys-276, His-279, Cys-299, and His-304. Residues 299 to 401 (CQLLEHKEHR…QMKLLQQQND (103 aa)) are necessary for oligomerization. Residues 299-401 (CQLLEHKEHR…QMKLLQQQND (103 aa)) adopt a coiled-coil conformation. Residues Lys-329, Lys-334, Lys-481, and Lys-504 each participate in a glycyl lysine isopeptide (Lys-Gly) (interchain with G-Cter in SUMO2) cross-link. Asymmetric dimethylarginine; alternate is present on Arg-515. The residue at position 515 (Arg-515) is an Omega-N-methylarginine; alternate. A Glycyl lysine isopeptide (Lys-Gly) (interchain with G-Cter in SUMO2) cross-link involves residue Lys-527. Arg-535 is subject to Omega-N-methylarginine. The tract at residues 536-563 (MQQPPAPVPTTTTTTQQHPRQAAPQMLQ) is disordered. At Arg-577 the chain carries Asymmetric dimethylarginine. Arg-591 bears the Asymmetric dimethylarginine; alternate mark. Position 591 is an omega-N-methylarginine; alternate (Arg-591). Asymmetric dimethylarginine is present on residues Arg-598 and Arg-604. Disordered regions lie at residues 608–629 (PQYSMMQPHLQRQHSNPGHAGP), 673–692 (NPENLPSLPDIPPIQLEDAG), and 703–818 (YISG…TPPL). Residues 723–759 (PSALSPGSSGLSNSHTPVRPPSTSSTGSRGSCGSSGR) show a composition bias toward low complexity. N6-acetyllysine; alternate is present on residues Lys-763 and Lys-769. Glycyl lysine isopeptide (Lys-Gly) (interchain with G-Cter in SUMO2); alternate cross-links involve residues Lys-763 and Lys-769. Residue Lys-774 forms a Glycyl lysine isopeptide (Lys-Gly) (interchain with G-Cter in SUMO2) linkage. Residues Lys-776 and Lys-793 each participate in a glycyl lysine isopeptide (Lys-Gly) (interchain with G-Cter in SUMO2); alternate cross-link. Glycyl lysine isopeptide (Lys-Gly) (interchain with G-Cter in SUMO1); alternate cross-links involve residues Lys-776 and Lys-793. Lys-793 bears the N6-acetyllysine; alternate mark. Residues 793–802 (KQEKTEDGRR) show a composition bias toward basic and acidic residues. Residue Lys-796 forms a Glycyl lysine isopeptide (Lys-Gly) (interchain with G-Cter in SUMO2) linkage. At Ser-803 the chain carries Phosphoserine. Over residues 807-818 (LSSPESSLTPPL) the composition is skewed to low complexity. Thr-815 carries the phosphothreonine modification. Residue Lys-861 forms a Glycyl lysine isopeptide (Lys-Gly) (interchain with G-Cter in SUMO2) linkage. Residue Ser-862 is modified to Phosphoserine. The PHD-type zinc-finger motif lies at 887-934 (EDWCAVCQNGGDLLCCEKCPKVFHLTCHVPTLLSFPSGDWICTFCRDI). At Lys-951 the chain carries N6-acetyllysine. N6-acetyllysine; alternate is present on Lys-953. Lys-953 is covalently cross-linked (Glycyl lysine isopeptide (Lys-Gly) (interchain with G-Cter in SUMO2); alternate). The region spanning 957-1080 (GLSPVDQRKC…LYFEDKLTEI (124 aa)) is the Bromo domain. Residues Lys-1007 and Lys-1043 each participate in a glycyl lysine isopeptide (Lys-Gly) (interchain with G-Cter in SUMO2) cross-link. At Thr-1051 the chain carries Phosphothreonine. Lys-1057 is covalently cross-linked (Glycyl lysine isopeptide (Lys-Gly) (interchain with G-Cter in SUMO2)). A disordered region spans residues 1088 to 1127 (PLPEFEQEEDDGEVTEDSDEDFIQPRRKRLKSDERPVHIK). The segment covering 1092 to 1109 (FEQEEDDGEVTEDSDEDF) has biased composition (acidic residues). Thr-1102 carries the phosphothreonine modification. Ser-1105 is subject to Phosphoserine. A Glycyl lysine isopeptide (Lys-Gly) (interchain with G-Cter in SUMO2) cross-link involves residue Lys-1118. Basic and acidic residues predominate over residues 1118–1127 (KSDERPVHIK). Ser-1119 is modified (phosphoserine).

Belongs to the TRIM/RBCC family. As to quaternary structure, homooligomer and heterooligomer with TRIM24 and TRIM28 family members. Interacts with SMAD4 in unstimulated cells. Found in a complex with SMAD2 and SMAD3 upon addition of TGF-beta. Interacts with SMAD2 and SMAD3. Interacts with SMAD4 under basal and induced conditions and, upon TGF-beta signaling, with activated SMAD2. Forms a ternary complex with SMAD4 and SMAD2 upon TGF-beta signaling. Post-translationally, sumoylated with SUMO1. In terms of tissue distribution, expressed in stem cells at the bottom of the crypts of the colon (at protein level). Expressed in colon adenomas and adenocarcinomas (at protein level). Expressed in brain, lung, liver, spleen, thymus, prostate, kidney, testis, heart, placenta, pancreas, small intestine, ovary, colon, skeletal muscle and hematopoietic progenitors.

The protein resides in the nucleus. It catalyses the reaction S-ubiquitinyl-[E2 ubiquitin-conjugating enzyme]-L-cysteine + [acceptor protein]-L-lysine = [E2 ubiquitin-conjugating enzyme]-L-cysteine + N(6)-ubiquitinyl-[acceptor protein]-L-lysine.. It functions in the pathway protein modification; protein ubiquitination. Its function is as follows. Acts as an E3 ubiquitin-protein ligase. Promotes SMAD4 ubiquitination, nuclear exclusion and degradation via the ubiquitin proteasome pathway. According to PubMed:16751102, does not promote a decrease in the level of endogenous SMAD4. May act as a transcriptional repressor. Inhibits the transcriptional response to TGF-beta/BMP signaling cascade. Plays a role in the control of cell proliferation. Its association with SMAD2 and SMAD3 stimulates erythroid differentiation of hematopoietic stem/progenitor. Monoubiquitinates SMAD4 and acts as an inhibitor of SMAD4-dependent TGF-beta/BMP signaling cascade (Monoubiquitination of SMAD4 hampers its ability to form a stable complex with activated SMAD2/3 resulting in inhibition of TGF-beta/BMP signaling cascade). This Homo sapiens (Human) protein is E3 ubiquitin-protein ligase TRIM33 (TRIM33).